A 1383-amino-acid chain; its full sequence is WD repeat-containing protein dyf-2 (1383 aa).

WD repeat units follow at residues 32 to 71 (EHGSGPIIHRWRPNGHTVAVACANNTVIYYDKKGNVIDAL), 72 to 112 (NPTG…TDTV), 118 to 157 (SSKELPTCLAWSPSTPTLVIGNNAGNIVVYNHRTSRRIAV), 160 to 198 (KHQRSVTQITVTPEDYVISCSDDNTLSVTTLEGTTVSTT), and 337 to 376 (ETEKNLSEIEVTEDGQLVAVSSQSGVLSIFVTKMPTLAAS). TPR repeat units follow at residues 756 to 789 (EEKNLLHAQIYTILSRYDDAEQLYLESSRPMEAL), 810 to 847 (PKEIPYLSKEYAQELELTGDHANSLANYEKGVMENPQN), 885 to 918 (RVVKRDCAIILEQMKQYTEAAQLYEVGLFYDRAA), 940 to 973 (PKIHIQYGKIMEKEKKYKVAVKCYETGRDYDNQV), 996 to 1029 (IEGAKLVAKFFVKLGDYNSAIQFLVMSQCVQEAF), 1031 to 1053 (LAEKNNAVREYAKAIEQHGNISQ), and 1064 to 1097 (VNDMFMAAKFYTQAGQYNNAINLLFKNGDDENCV).

As to quaternary structure, component of the IFT complex A (IFT-A) composed of at least che-11, daf-10, dyf-2, ift-139, ift-43 and ifta-1. In terms of tissue distribution, expressed in ciliated sensory neurons.

Its subcellular location is the cell projection. The protein localises to the cilium. Component of the IFT complex A (IFT-A), a complex required for retrograde ciliary transport. Moves along the ciliary axoneme and is involved in the assembly, localization and the movement of other intraflagellar transport (IFT) proteins along the cilia axoneme. May also associate with the BBSome complex in order to mediate ciliary transport. Regulates cilia biogenesis, morphology and sensitivity to environmental cues. In Caenorhabditis elegans, this protein is WD repeat-containing protein dyf-2.